A 232-amino-acid chain; its full sequence is 6-phosphogluconolactonase (232 aa).

It belongs to the glucosamine/galactosamine-6-phosphate isomerase family. 6-phosphogluconolactonase subfamily.

It carries out the reaction 6-phospho-D-glucono-1,5-lactone + H2O = 6-phospho-D-gluconate + H(+). It participates in carbohydrate degradation; pentose phosphate pathway; D-ribulose 5-phosphate from D-glucose 6-phosphate (oxidative stage): step 2/3. Functionally, hydrolysis of 6-phosphogluconolactone to 6-phosphogluconate. The protein is 6-phosphogluconolactonase (pgl) of Aggregatibacter actinomycetemcomitans (Actinobacillus actinomycetemcomitans).